The following is a 425-amino-acid chain: Histidine--tRNA ligase (425 aa).

This sequence belongs to the class-II aminoacyl-tRNA synthetase family. As to quaternary structure, homodimer.

The protein resides in the cytoplasm. It catalyses the reaction tRNA(His) + L-histidine + ATP = L-histidyl-tRNA(His) + AMP + diphosphate + H(+). This chain is Histidine--tRNA ligase, found in Buchnera aphidicola subsp. Baizongia pistaciae (strain Bp).